A 352-amino-acid chain; its full sequence is Holliday junction branch migration complex subunit RuvB (352 aa).

Positions 1 to 42 (MAIVSSSAGRADSQPPAAKSRVVDASPLPEEASPAREDGLRP) are disordered. Positions 13–201 (SQPPAAKSRV…FGLIQRLEFY (189 aa)) are large ATPase domain (RuvB-L). Residues 33–42 (SPAREDGLRP) show a composition bias toward basic and acidic residues. Residues L40, R41, G82, K85, T86, T87, R191, Y201, and R238 each coordinate ATP. T86 is a binding site for Mg(2+). Positions 202 to 273 (GLEDLQAIVE…LVDEALTLHR (72 aa)) are small ATPAse domain (RuvB-S). Positions 276-352 (ARGLDASDRR…RRHLGWPELP (77 aa)) are head domain (RuvB-H). 2 residues coordinate DNA: R331 and R336.

The protein belongs to the RuvB family. In terms of assembly, homohexamer. Forms an RuvA(8)-RuvB(12)-Holliday junction (HJ) complex. HJ DNA is sandwiched between 2 RuvA tetramers; dsDNA enters through RuvA and exits via RuvB. An RuvB hexamer assembles on each DNA strand where it exits the tetramer. Each RuvB hexamer is contacted by two RuvA subunits (via domain III) on 2 adjacent RuvB subunits; this complex drives branch migration. In the full resolvosome a probable DNA-RuvA(4)-RuvB(12)-RuvC(2) complex forms which resolves the HJ.

The protein localises to the cytoplasm. It carries out the reaction ATP + H2O = ADP + phosphate + H(+). In terms of biological role, the RuvA-RuvB-RuvC complex processes Holliday junction (HJ) DNA during genetic recombination and DNA repair, while the RuvA-RuvB complex plays an important role in the rescue of blocked DNA replication forks via replication fork reversal (RFR). RuvA specifically binds to HJ cruciform DNA, conferring on it an open structure. The RuvB hexamer acts as an ATP-dependent pump, pulling dsDNA into and through the RuvAB complex. RuvB forms 2 homohexamers on either side of HJ DNA bound by 1 or 2 RuvA tetramers; 4 subunits per hexamer contact DNA at a time. Coordinated motions by a converter formed by DNA-disengaged RuvB subunits stimulates ATP hydrolysis and nucleotide exchange. Immobilization of the converter enables RuvB to convert the ATP-contained energy into a lever motion, pulling 2 nucleotides of DNA out of the RuvA tetramer per ATP hydrolyzed, thus driving DNA branch migration. The RuvB motors rotate together with the DNA substrate, which together with the progressing nucleotide cycle form the mechanistic basis for DNA recombination by continuous HJ branch migration. Branch migration allows RuvC to scan DNA until it finds its consensus sequence, where it cleaves and resolves cruciform DNA. The protein is Holliday junction branch migration complex subunit RuvB of Prochlorococcus marinus (strain MIT 9313).